We begin with the raw amino-acid sequence, 380 residues long: Cytochrome b (380 aa).

Transmembrane regions (helical) follow at residues 34–54 (FGSLLGICLMTQILTGLLLAM), 78–99 (WLIRNLHANGASFFFICIYLHI), 114–134 (WNTGVMLLLTLMATAFVGYVL), and 179–199 (FFALHFLLPFVIAGLTLIHLT). The heme b site is built by histidine 84 and histidine 98. Positions 183 and 197 each coordinate heme b. Histidine 202 contributes to the a ubiquinone binding site. 4 helical membrane-spanning segments follow: residues 227–247 (LKDILGFMFMLLPLTTLALFS), 289–309 (LGGVLALAASVLILFLVPFLH), 321–341 (LSQLLFWVLVANLLILTWVGS), and 348–368 (FIIIGQLASLTYFTILLILFP).

Belongs to the cytochrome b family. The cytochrome bc1 complex contains 11 subunits: 3 respiratory subunits (MT-CYB, CYC1 and UQCRFS1), 2 core proteins (UQCRC1 and UQCRC2) and 6 low-molecular weight proteins (UQCRH/QCR6, UQCRB/QCR7, UQCRQ/QCR8, UQCR10/QCR9, UQCR11/QCR10 and a cleavage product of UQCRFS1). This cytochrome bc1 complex then forms a dimer. Heme b serves as cofactor.

It is found in the mitochondrion inner membrane. In terms of biological role, component of the ubiquinol-cytochrome c reductase complex (complex III or cytochrome b-c1 complex) that is part of the mitochondrial respiratory chain. The b-c1 complex mediates electron transfer from ubiquinol to cytochrome c. Contributes to the generation of a proton gradient across the mitochondrial membrane that is then used for ATP synthesis. This chain is Cytochrome b (MT-CYB), found in Pterodroma hypoleuca (Bonin petrel).